The sequence spans 306 residues: tRNA dimethylallyltransferase (306 aa).

9–16 contacts ATP; sequence GPTAIGKT. Residue 11–16 participates in substrate binding; it reads TAIGKT. Positions 34–37 are interaction with substrate tRNA; sequence DSMQ.

It belongs to the IPP transferase family. As to quaternary structure, monomer. Mg(2+) is required as a cofactor.

It carries out the reaction adenosine(37) in tRNA + dimethylallyl diphosphate = N(6)-dimethylallyladenosine(37) in tRNA + diphosphate. Its function is as follows. Catalyzes the transfer of a dimethylallyl group onto the adenine at position 37 in tRNAs that read codons beginning with uridine, leading to the formation of N6-(dimethylallyl)adenosine (i(6)A). In Lactobacillus acidophilus (strain ATCC 700396 / NCK56 / N2 / NCFM), this protein is tRNA dimethylallyltransferase.